Consider the following 364-residue polypeptide: MAVALAGARSPGAGAILSLRRLAPAAAAPVRLGGSGTPGTRRRRGIAMAAAASAPPAPADALPKGADSFFRTVISNMEKVYLSRNPTAKTILELVRSYDGDHICYDHFAFRTFGVDGYGIKSLAEFFTDFGYVPREELRFPAKKLRALWFSPPTNDGYTGTGVYGPLPRIFISELLVDELSPQSQDIIQKYIRTSGKGNKHATLASTSGELTWEKPIYSDFQVLSRESEYAAWTLVNGYALNHTTISTHRLISDIRSINKFNKFVEDNGFKLNSEGGILKVSPDGLLQQSSTVADSALFTFADGITESIPRSYIEFAERLVLPQFKDLPNDEVNEHHRRDGFEVGNADKIFESTSNDQLTRRSA.

The N-terminal 49 residues, 1 to 49 (MAVALAGARSPGAGAILSLRRLAPAAAAPVRLGGSGTPGTRRRRGIAMA), are a transit peptide targeting the chloroplast. Residues H107 and R111 each contribute to the 2-oxoadipate site. H107 contacts Fe(2+). Residue H243 coordinates Fe(2+). Q289 and Y313 together coordinate 2-oxoadipate. E315 is a Fe(2+) binding site.

This sequence belongs to the 2-oxoadipate dioxygenase/decarboxylase family. Requires Fe(2+) as cofactor. In terms of tissue distribution, expressed in roots, stems, leaf sheaths, leaf blades, panicles, and endosperm.

Its subcellular location is the plastid. The protein resides in the chloroplast. It localises to the amyloplast. The catalysed reaction is 2-oxoadipate + O2 = (R)-2-hydroxyglutarate + CO2. Its pathway is amino-acid degradation. Functionally, catalyzes the decarboxylation and hydroxylation of 2-oxoadipate (2OA) to form D-2-hydroxyglutarate (D-2-HGA). Is involved in a D-lysine catabolic pathway. Involved in the regulation of starch synthesis and amyloplast development within the peripheral endosperm during the grain-filling stage. This Oryza sativa subsp. japonica (Rice) protein is 2-oxoadipate dioxygenase/decarboxylase, chloroplastic/amyloplastic.